A 309-amino-acid polypeptide reads, in one-letter code: CDK-activating kinase assembly factor MAT1 (309 aa).

Met1 carries the N-acetylmethionine modification. The RING-type zinc-finger motif lies at 6-50 (CPRCKTTKYRNPSLKLMVNVCGHTLCESCVDLLFVRGAGNCPECG). Phosphothreonine is present on Thr51. A UIM domain is found at 142 to 161 (REQEELEEALEVERQEHEQR). Ser279 bears the Phosphoserine mark.

Associates primarily with CDK7 and cyclin H to form the CAK complex. CAK can further associate with the core-TFIIH to form the TFIIH basal transcription factor.

The protein resides in the nucleus. Stabilizes the cyclin H-CDK7 complex to form a functional CDK-activating kinase (CAK) enzymatic complex. CAK activates the cyclin-associated kinases CDK1, CDK2, CDK4 and CDK6 by threonine phosphorylation. CAK complexed to the core-TFIIH basal transcription factor activates RNA polymerase II by serine phosphorylation of the repetitive C-terminal domain (CTD) of its large subunit (POLR2A), allowing its escape from the promoter and elongation of the transcripts. Involved in cell cycle control and in RNA transcription by RNA polymerase II. This Mus musculus (Mouse) protein is CDK-activating kinase assembly factor MAT1 (Mnat1).